Here is a 268-residue protein sequence, read N- to C-terminus: MTQVVILLAYQGTAYAGWQRQPNDLSIQEVIENSLAQVVGKRIPVTSSGRTDAEVHAFGQVAHFSQPDHPQFSQASSIKKMLNALLPKDIVIRDVVLGDDKFHSRFSAIAKEYRYVLTRSPKPLPWERYFAYYPRHHLKTDLMQEGAQYLLGTHDFASFANHGRDYTSTIRTLFNLDIVDHGETVTIICRGNGFLYKMVRNIVGSLLDISRGKYPPEYIQEILMQKNRRQGPPAAPSHALSLYHVCYPKPYHWFCTPECNINSLKEEK.

D52 (nucleophile) is an active-site residue. Y113 serves as a coordination point for substrate.

Belongs to the tRNA pseudouridine synthase TruA family. In terms of assembly, homodimer.

It catalyses the reaction uridine(38/39/40) in tRNA = pseudouridine(38/39/40) in tRNA. In terms of biological role, formation of pseudouridine at positions 38, 39 and 40 in the anticodon stem and loop of transfer RNAs. The chain is tRNA pseudouridine synthase A from Chlamydia abortus (strain DSM 27085 / S26/3) (Chlamydophila abortus).